Reading from the N-terminus, the 282-residue chain is L-allo-isoleucyltransferase (282 aa).

The active-site Acyl-thioester intermediate is cysteine 105. Residues 169–261 form the AB hydrolase-1 domain; that stretch reads HTQSTYTPSD…DGQHHDFVDG (93 aa).

The protein belongs to the AB hydrolase superfamily.

It catalyses the reaction holo-[CmaD peptidyl-carrier protein] + L-alloisoleucyl-[CmaA peptidyl-carrier protein] = L-alloisoleucyl-[CmaD peptidyl-carrier protein] + holo-[CmaA peptidyl-carrier protein]. Its function is as follows. Involved in the biosynthesis of the phytotoxin coronatine (COR). Catalyzes the transfer of the aminoacyl group covalently attached to the pantetheinyl arm of CmaA to the holo-pantetheinyl arm of CmaD. During the shuttling process, CmaE generates a covalent-aminoacyl-S-Cys enzyme intermediate by the action of its donor substrate L-aminoacyl-S-CmaA and delivers it to the sulfhydryl group attached to the phosphopantetheinyl arm on CmaD. The protein is L-allo-isoleucyltransferase of Pseudomonas savastanoi pv. glycinea (Pseudomonas syringae pv. glycinea).